The sequence spans 1067 residues: Cadmium/zinc-transporting ATPase HMA2 (1067 aa).

Residues 9–75 (QKSYFDVLGI…ALNQARLEAS (67 aa)) enclose the HMA domain. Helical transmembrane passes span 94–114 (YVLL…WHPL), 117–137 (FALV…IAAI), 140–160 (LTLD…ALKD), 162–182 (SEAG…TRAS), 313–333 (YTPA…IAKA), 342–362 (LALV…TPIA), 649–669 (IIVN…LAFA), and 673–693 (LIWA…MYSM). 3 disordered regions span residues 711–739 (HHGS…HHCS), 760–790 (HDHH…SHGH), and 960–996 (NDTH…GHHP). Positions 724-735 (HGSHAKKNHGVS) are enriched in basic residues. Composition is skewed to basic and acidic residues over residues 760-774 (HDHH…EPAH) and 975-996 (SSDH…GHHP).

It belongs to the cation transport ATPase (P-type) (TC 3.A.3) family. Type IB subfamily. In roots, localizes at the pericycle cells. In nodes, localizes in the phloem parenchyma and companion cells of both enlarged and diffuse vascular bundles.

It is found in the cell membrane. The catalysed reaction is Zn(2+)(in) + ATP + H2O = Zn(2+)(out) + ADP + phosphate + H(+). It carries out the reaction Cd(2+)(in) + ATP + H2O = Cd(2+)(out) + ADP + phosphate + H(+). Its function is as follows. Zinc/cadmium transporter that plays an essential role in promoting translocation of zinc and cadmium from roots to shoots. May control cadmium loading into xylem. In roots, transports zinc and cadmium from the apoplast to the symplast to facilitate translocation via the phloem. In nodes, functions to load zinc and cadmium to the phloem for the preferential distribution to the upper nodes and panicles. This Oryza sativa subsp. japonica (Rice) protein is Cadmium/zinc-transporting ATPase HMA2.